The following is a 236-amino-acid chain: Small ribosomal subunit protein uS2c (236 aa).

Belongs to the universal ribosomal protein uS2 family.

It localises to the plastid. It is found in the chloroplast. The sequence is that of Small ribosomal subunit protein uS2c (rps2) from Chloranthus spicatus (Chulantree).